Consider the following 224-residue polypeptide: MTLFHFGNCFALAYFPYFITYKCSGLSEYNAFWKCVQAGVTYLFVQLCKMLFLATFFPTWEGGIYDFIGEFMKASVDVADLIGLNLVMSRNAGKGEYKIMVAALGWATAELIMSRCIPLWVGARGIEFDWKYIQMSIDSNISLVHYIVASAQVWMITRYDLYHTFRPAVLLLMFLSVYKAFVMETFVHLCSLGSWAALLARAVVTGLLALSTLALYVAVVNVHS.

The helical transmembrane segment at 1–21 (MTLFHFGNCFALAYFPYFITY) threads the bilayer. The Cytoplasmic portion of the chain corresponds to 22–34 (KCSGLSEYNAFWK). The helical transmembrane segment at 35–58 (CVQAGVTYLFVQLCKMLFLATFFP) threads the bilayer. Over 59-66 (TWEGGIYD) the chain is Lumenal. Residues 67–88 (FIGEFMKASVDVADLIGLNLVM) form a helical membrane-spanning segment. At 89 to 98 (SRNAGKGEYK) the chain is on the cytoplasmic side. A helical transmembrane segment spans residues 99-124 (IMVAALGWATAELIMSRCIPLWVGAR). At 125–129 (GIEFD) the chain is on the lumenal side. Residues 130–155 (WKYIQMSIDSNISLVHYIVASAQVWM) form a helical membrane-spanning segment. Topologically, residues 156–164 (ITRYDLYHT) are cytoplasmic. The chain crosses the membrane as a helical span at residues 165-187 (FRPAVLLLMFLSVYKAFVMETFV). At 188–194 (HLCSLGS) the chain is on the lumenal side. Residues 195–216 (WAALLARAVVTGLLALSTLALY) traverse the membrane as a helical segment. At 217–224 (VAVVNVHS) the chain is on the cytoplasmic side.

The protein belongs to the TMEM147 family. In terms of assembly, component of the back of Sec61 (BOS) complex, composed of NCLN/Nicalin, NOMO (NOMO1, NOMO2 or NOMO3) and TMEM147. The BOS complex is part of the multi-pass translocon (MPT) complex, composed of three subcomplexes, the GEL complex (composed of RAB5IF/OPTI and TMCO1), the BOS complex (composed of NCLN/Nicalin, NOMO and TMEM147) and the PAT complex (composed of WDR83OS/Asterix and CCDC47). The MPT complex associates with the SEC61 complex. Interacts with CHRM3, CHRM1 and AVPR2. Interacts with LBR; promoting LBR localization to the nucleus inner membrane. Interacts with DHCR7.

It is found in the endoplasmic reticulum membrane. The protein localises to the nucleus membrane. It localises to the cell membrane. In terms of biological role, component of the multi-pass translocon (MPT) complex that mediates insertion of multi-pass membrane proteins into the lipid bilayer of membranes. The MPT complex takes over after the SEC61 complex: following membrane insertion of the first few transmembrane segments of proteins by the SEC61 complex, the MPT complex occludes the lateral gate of the SEC61 complex to promote insertion of subsequent transmembrane regions. Also acts as a negative regulator of CHRM3 function, most likely by interfering with its trafficking to the cell membrane. Negatively regulates CHRM3-mediated calcium mobilization and activation of RPS6KA1/p90RSK activity. Regulates LBR localization to the nucleus inner membrane. The sequence is that of BOS complex subunit TMEM147 from Homo sapiens (Human).